A 1911-amino-acid chain; its full sequence is Adenylate kinase 9 (1911 aa).

The adenylate kinase 1 stretch occupies residues Val-31 to Lys-285. Gly-40–Thr-45 contributes to the ATP binding site. Positions Glu-60–Ile-89 are NMP 1. AMP-binding positions include Gln-87 to Ile-89 and Glu-116 to Ser-119. The segment at Gly-160 to Glu-205 is LID 1. Residues Arg-185–Glu-210 form a disordered region. The span at Gly-197–Glu-210 shows a compositional bias: acidic residues. Arg-229 contacts AMP. 2 coiled-coil regions span residues Ala-443–Val-485 and Leu-676–Glu-711. 2 disordered regions span residues Lys-728–Pro-796 and Asp-892–Lys-926. Residues Glu-733–Val-750 show a composition bias toward acidic residues. A compositionally biased stretch (basic and acidic residues) spans His-751 to Arg-761. 2 stretches are compositionally biased toward acidic residues: residues Glu-767–Val-791 and Asp-892–Glu-919. 2 adenylate kinase regions span residues Leu-992–Leu-1203 and Ile-1412–Gln-1601. Gly-1001–Met-1006 serves as a coordination point for ATP. The segment at Gln-1021 to Ala-1052 is NMP 2. AMP-binding positions include Gln-1050–Ala-1052 and Val-1079–Thr-1082. The LID 2 stretch occupies residues Asp-1124–Asp-1144. Residue Lys-1421–Thr-1426 participates in ATP binding. An NMP 3 region spans residues Ser-1441–Ala-1472. Residues Arg-1447, Met-1470–Ala-1472, Gly-1499–Val-1502, Gln-1506, and Arg-1543 contribute to the AMP site. The LID 3 stretch occupies residues Leu-1536–Asn-1550.

The protein belongs to the adenylate kinase family.

It localises to the cytoplasm. Its subcellular location is the nucleus. The protein localises to the cell projection. It is found in the cilium. The protein resides in the flagellum. It catalyses the reaction a ribonucleoside 5'-phosphate + ATP = a ribonucleoside 5'-diphosphate + ADP. It carries out the reaction AMP + ATP = 2 ADP. The enzyme catalyses GTP + AMP = GDP + ADP. The catalysed reaction is CMP + ATP = CDP + ADP. It catalyses the reaction GTP + CMP = CDP + GDP. It carries out the reaction dAMP + ATP = dADP + ADP. The enzyme catalyses dCMP + ATP = dCDP + ADP. The catalysed reaction is a ribonucleoside 5'-diphosphate + ATP = a ribonucleoside 5'-triphosphate + ADP. It catalyses the reaction CDP + ATP = CTP + ADP. It carries out the reaction CDP + GTP = CTP + GDP. The enzyme catalyses GDP + ATP = GTP + ADP. The catalysed reaction is UDP + ATP = UTP + ADP. It catalyses the reaction GTP + UDP = UTP + GDP. It carries out the reaction dTDP + GTP = dTTP + GDP. The enzyme catalyses dCDP + ATP = dCTP + ADP. The catalysed reaction is dCDP + GTP = dCTP + GDP. It catalyses the reaction dGDP + ATP = dGTP + ADP. It carries out the reaction dTDP + ATP = dTTP + ADP. The enzyme catalyses dADP + GTP = dATP + GDP. Its function is as follows. Broad-specificity nucleoside phosphate kinase involved in cellular nucleotide homeostasis by catalyzing nucleoside-phosphate interconversions. Similar to other adenylate kinases, preferentially catalyzes the phosphorylation of the nucleoside monophosphate AMP with ATP as phosphate donor to produce ADP. In vitro, can also catalyze the phosphorylation of CMP, dAMP and dCMP and use GTP as an alternate phosphate donor. Moreover, exhibits a diphosphate kinase activity, producing ATP, CTP, GTP, UTP, TTP, dATP, dCTP and dGTP from the corresponding diphosphate substrates with either ATP or GTP as phosphate donors. For this activity shows the following substrate preference CDP &gt; UDP &gt; ADP &gt; TDP. The polypeptide is Adenylate kinase 9 (Homo sapiens (Human)).